The following is a 115-amino-acid chain: Large ribosomal subunit protein bL19 (115 aa).

This sequence belongs to the bacterial ribosomal protein bL19 family.

Functionally, this protein is located at the 30S-50S ribosomal subunit interface and may play a role in the structure and function of the aminoacyl-tRNA binding site. In Leifsonia xyli subsp. xyli (strain CTCB07), this protein is Large ribosomal subunit protein bL19.